The sequence spans 383 residues: Non-structural maintenance of chromosomes element 4 homolog B (383 aa).

Over residues M1–D22 the composition is skewed to basic and acidic residues. Disordered stretches follow at residues M1–I59, M198–S231, and Q355–L383. Basic residues predominate over residues R201–K212. Positions Q355 to E372 are enriched in polar residues.

This sequence belongs to the NSE4 family. Interacts with SMC5, SMC6A or SMC6B. The SMC5-SMC6 complex is composed of the SMC5 and SMC6 heterodimer attached via their hinge domain and from the non-SMC subunit NSE4A or NSE4B. Not expressed in seedlings, rosette leaves and floral buds.

The protein resides in the nucleus. Its function is as follows. Component of the SMC5-SMC6 complex, that promotes sister chromatid alignment after DNA damage and facilitates double-stranded DNA breaks (DSBs) repair via homologous recombination between sister chromatids. The protein is Non-structural maintenance of chromosomes element 4 homolog B (NSE4B) of Arabidopsis thaliana (Mouse-ear cress).